The primary structure comprises 1121 residues: Putative ATP-dependent RNA helicase ECM32 (1121 aa).

Positions 157–187 (NSTRKPRKKGGRRVGRGKKGRKGAKIKKEKK) are disordered. The segment covering 160–184 (RKPRKKGGRRVGRGKKGRKGAKIKK) has biased composition (basic residues). Ser-227 is subject to Phosphoserine. Residues 233–452 (AKVSKSETSR…NQEKNNGKTK (220 aa)) are disordered. Over residues 251-263 (NKGKGNKANHKKN) the composition is skewed to basic residues. Positions 278–287 (IRNNVRNSQP) are enriched in polar residues. A compositionally biased stretch (basic and acidic residues) spans 307–316 (GKNESVDKHQ). The segment covering 323–336 (LNGNGSGSTNTTGL) has biased composition (low complexity). Over residues 342–363 (DHAGQKTKGNDKTGNKNPREAK) the composition is skewed to basic and acidic residues. Residues 376–413 (KSNNQPNKGTSRWTIGSDTESSREPSISPNENTTSITK) show a composition bias toward polar residues. Position 392 is a phosphoserine (Ser-392). The segment covering 426-452 (LNEKSKTTTMPKKLETKNQEKNNGKTK) has biased composition (basic and acidic residues). At Thr-465 the chain carries Phosphothreonine. 670 to 677 (GPPGTGKT) is a binding site for ATP.

This sequence belongs to the DNA2/NAM7 helicase family. Interacts with the peptidyl release factors SUP35 and weakly with SUP45.

It is found in the cytoplasm. It carries out the reaction ATP + H2O = ADP + phosphate + H(+). Functionally, probable RNA helicase, which may be involved in modulation of the translation termination process. Probably unwinds double-stranded RNA. In vitro, unwinds covalently closed, circular DNA in the presence of a DNA topoisomerase TOP1 and replication factor-A protein RFA1. This Saccharomyces cerevisiae (strain ATCC 204508 / S288c) (Baker's yeast) protein is Putative ATP-dependent RNA helicase ECM32 (ECM32).